We begin with the raw amino-acid sequence, 370 residues long: uncharacterized protein (370 aa).

This is an uncharacterized protein from Caenorhabditis elegans.